Consider the following 351-residue polypeptide: Nuclear inhibitor of protein phosphatase 1 (351 aa).

Residues 1-142 (MAAAANSGSS…LPSAVKGDEK (142 aa)) are interaction with CDC5L, SF3B1 and MELK. The FHA domain maps to 49 to 101 (YLFGRNPDLCDFTIDHQSCSRVHAALVYHKHLKRVFLIDLNSTHGTFLGHIRL). An interaction with EED region spans residues 143 to 224 (MGGEDDELKG…VDPSVGRFRN (82 aa)). A Phosphothreonine modification is found at Thr-161. A phosphoserine mark is found at Ser-178 and Ser-199. Short sequence motifs (nuclear localization signal) lie at residues 185–209 (GNLD…DDEI) and 210–240 (INPE…RVEG). The involved in PP-1 inhibition stretch occupies residues 191 to 200 (RPKRKRKNSR). The involved in PP-1 binding stretch occupies residues 200–203 (RVTF). Ser-204 is subject to Phosphoserine. Ser-249 carries the post-translational modification Phosphoserine. Position 264 is a phosphotyrosine; by LYN; in vitro (Tyr-264). The interval 310 to 329 (AVNMNPAPNPAVYNPEAVNE) is interaction with EED. The disordered stretch occupies residues 316-351 (APNPAVYNPEAVNEPKKKKYAKEAWPGKKPTPSLLI). Positions 330-351 (PKKKKYAKEAWPGKKPTPSLLI) are RNA-binding. The segment at 331–337 (KKKKYAK) is involved in PP-1 inhibition. Position 335 is a phosphotyrosine (Tyr-335).

Interacts with phosphorylated CDC5L, SF3B1 and MELK. Interacts with EED, in a nucleic acid-stimulated manner. Part of a complex consisting of PPP1R8, EED, HDAC2 and PP-1. Part of the spliceosome. Interacts with PPP1CA, PPP1CB and PPP1CC. Requires Mg(2+) as cofactor. May be inactivated by phosphorylation on Ser-199 or Ser-204. Phosphorylated by Lyn in vitro on Tyr-264, and also on Tyr-335 in the presence of RNA. In terms of tissue distribution, ubiquitously expressed, with highest levels in heart and skeletal muscle, followed by brain, placenta, lung, liver and pancreas. Less abundant in kidney. The concentration and ratio between isoforms is cell-type dependent. Isoform Alpha (&gt;90%) and isoform Beta were found in brain, heart and kidney. Isoform Gamma is mainly found in B-cells and T-lymphocytes, and has been found in 293 embryonic kidney cells.

The protein resides in the nucleus. The protein localises to the nucleus speckle. Its subcellular location is the cytoplasm. Functionally, inhibitor subunit of the major nuclear protein phosphatase-1 (PP-1). It has RNA-binding activity but does not cleave RNA and may target PP-1 to RNA-associated substrates. May also be involved in pre-mRNA splicing. Binds DNA and might act as a transcriptional repressor. Seems to be required for cell proliferation. Isoform Gamma is a site-specific single-strand endoribonuclease that cleaves single strand RNA 3' to purines and pyrimidines in A+U-rich regions. It generates 5'-phosphate termini at the site of cleavage. This isoform does not inhibit PP-1. May be implicated in mRNA splicing. This Homo sapiens (Human) protein is Nuclear inhibitor of protein phosphatase 1 (PPP1R8).